We begin with the raw amino-acid sequence, 248 residues long: Pyridoxine 5'-phosphate synthase (248 aa).

3-amino-2-oxopropyl phosphate is bound at residue N10. 12–13 contributes to the 1-deoxy-D-xylulose 5-phosphate binding site; it reads DH. R21 contacts 3-amino-2-oxopropyl phosphate. H46 (proton acceptor) is an active-site residue. The 1-deoxy-D-xylulose 5-phosphate site is built by R48 and H53. E73 (proton acceptor) is an active-site residue. Residue T103 coordinates 1-deoxy-D-xylulose 5-phosphate. H194 (proton donor) is an active-site residue. Residues G195 and 216–217 contribute to the 3-amino-2-oxopropyl phosphate site; that span reads GH.

Belongs to the PNP synthase family. In terms of assembly, homooctamer; tetramer of dimers.

It localises to the cytoplasm. The enzyme catalyses 3-amino-2-oxopropyl phosphate + 1-deoxy-D-xylulose 5-phosphate = pyridoxine 5'-phosphate + phosphate + 2 H2O + H(+). Its pathway is cofactor biosynthesis; pyridoxine 5'-phosphate biosynthesis; pyridoxine 5'-phosphate from D-erythrose 4-phosphate: step 5/5. Functionally, catalyzes the complicated ring closure reaction between the two acyclic compounds 1-deoxy-D-xylulose-5-phosphate (DXP) and 3-amino-2-oxopropyl phosphate (1-amino-acetone-3-phosphate or AAP) to form pyridoxine 5'-phosphate (PNP) and inorganic phosphate. The polypeptide is Pyridoxine 5'-phosphate synthase (Legionella pneumophila (strain Paris)).